The sequence spans 320 residues: Malate dehydrogenase (320 aa).

NAD(+) is bound by residues 10 to 15 and aspartate 34; that span reads GAGMIG. 2 residues coordinate substrate: arginine 83 and arginine 89. NAD(+) contacts are provided by residues asparagine 96 and 119–121; that span reads ITN. Asparagine 121 and arginine 152 together coordinate substrate. The active-site Proton acceptor is histidine 176.

The protein belongs to the LDH/MDH superfamily. MDH type 3 family.

The catalysed reaction is (S)-malate + NAD(+) = oxaloacetate + NADH + H(+). In terms of biological role, catalyzes the reversible oxidation of malate to oxaloacetate. This chain is Malate dehydrogenase, found in Caulobacter vibrioides (strain NA1000 / CB15N) (Caulobacter crescentus).